The sequence spans 242 residues: NADH-quinone oxidoreductase subunit C (242 aa).

The insert stretch occupies residues 67 to 101 (VVNSVGLGHKEQGAKPITNRRTTSDNVGESKSIDY).

Belongs to the complex I 30 kDa subunit family. In terms of assembly, NDH-1 is composed of 14 different subunits. Subunits NuoB, C, D, E, F, and G constitute the peripheral sector of the complex.

It is found in the cell inner membrane. It carries out the reaction a quinone + NADH + 5 H(+)(in) = a quinol + NAD(+) + 4 H(+)(out). Functionally, NDH-1 shuttles electrons from NADH, via FMN and iron-sulfur (Fe-S) centers, to quinones in the respiratory chain. The immediate electron acceptor for the enzyme in this species is believed to be ubiquinone. Couples the redox reaction to proton translocation (for every two electrons transferred, four hydrogen ions are translocated across the cytoplasmic membrane), and thus conserves the redox energy in a proton gradient. The sequence is that of NADH-quinone oxidoreductase subunit C from Rickettsia conorii (strain ATCC VR-613 / Malish 7).